A 117-amino-acid polypeptide reads, in one-letter code: uncharacterized protein (117 aa).

It to H.influenzae HI_1162 and to HI_0925.

This is an uncharacterized protein from Escherichia coli (strain K12).